Here is a 348-residue protein sequence, read N- to C-terminus: Mannonate dehydratase (348 aa).

Belongs to the mannonate dehydratase family. The cofactor is Fe(2+). It depends on Mn(2+) as a cofactor.

The enzyme catalyses D-mannonate = 2-dehydro-3-deoxy-D-gluconate + H2O. It functions in the pathway carbohydrate metabolism; pentose and glucuronate interconversion. Functionally, catalyzes the dehydration of D-mannonate. This is Mannonate dehydratase from Streptococcus uberis (strain ATCC BAA-854 / 0140J).